The sequence spans 65 residues: Large ribosomal subunit protein bL35 (65 aa).

The protein belongs to the bacterial ribosomal protein bL35 family.

This Clostridium acetobutylicum (strain ATCC 824 / DSM 792 / JCM 1419 / IAM 19013 / LMG 5710 / NBRC 13948 / NRRL B-527 / VKM B-1787 / 2291 / W) protein is Large ribosomal subunit protein bL35.